The chain runs to 364 residues: Probable dual-specificity RNA methyltransferase RlmN (364 aa).

Glu107 serves as the catalytic Proton acceptor. Residues 113-346 (HEYGNSVCVT…ATIRREQGAD (234 aa)) enclose the Radical SAM core domain. A disulfide bridge links Cys120 with Cys351. Residues Cys127, Cys131, and Cys134 each contribute to the [4Fe-4S] cluster site. Residues 177–178 (GE), Ser209, 232–234 (SLH), and Asn308 contribute to the S-adenosyl-L-methionine site. Catalysis depends on Cys351, which acts as the S-methylcysteine intermediate.

This sequence belongs to the radical SAM superfamily. RlmN family. [4Fe-4S] cluster serves as cofactor.

The protein localises to the cytoplasm. The enzyme catalyses adenosine(2503) in 23S rRNA + 2 reduced [2Fe-2S]-[ferredoxin] + 2 S-adenosyl-L-methionine = 2-methyladenosine(2503) in 23S rRNA + 5'-deoxyadenosine + L-methionine + 2 oxidized [2Fe-2S]-[ferredoxin] + S-adenosyl-L-homocysteine. It carries out the reaction adenosine(37) in tRNA + 2 reduced [2Fe-2S]-[ferredoxin] + 2 S-adenosyl-L-methionine = 2-methyladenosine(37) in tRNA + 5'-deoxyadenosine + L-methionine + 2 oxidized [2Fe-2S]-[ferredoxin] + S-adenosyl-L-homocysteine. In terms of biological role, specifically methylates position 2 of adenine 2503 in 23S rRNA and position 2 of adenine 37 in tRNAs. Confers resistance to some classes of antibiotics. The sequence is that of Probable dual-specificity RNA methyltransferase RlmN from Staphylococcus saprophyticus subsp. saprophyticus (strain ATCC 15305 / DSM 20229 / NCIMB 8711 / NCTC 7292 / S-41).